The chain runs to 403 residues: Cytoplasmic tRNA 2-thiolation protein 2 (403 aa).

Belongs to the CTU2/NCS2 family.

The protein localises to the cytoplasm. The protein operates within tRNA modification; 5-methoxycarbonylmethyl-2-thiouridine-tRNA biosynthesis. Its function is as follows. Plays a central role in 2-thiolation of mcm(5)S(2)U at tRNA wobble positions of tRNA(Lys), tRNA(Glu) and tRNA(Gln). May act by forming a heterodimer with NCS6/CTU1 that ligates sulfur from thiocarboxylated URM1 onto the uridine of tRNAs at wobble position. This Drosophila ananassae (Fruit fly) protein is Cytoplasmic tRNA 2-thiolation protein 2.